A 505-amino-acid polypeptide reads, in one-letter code: Glycerol kinase (505 aa).

Position 15 (Thr15) interacts with ADP. Residues Thr15, Thr16, and Ser17 each coordinate ATP. Thr15 contacts sn-glycerol 3-phosphate. Arg19 contacts ADP. Sn-glycerol 3-phosphate contacts are provided by Arg85, Glu86, Tyr136, and Asp249. Residues Arg85, Glu86, Tyr136, Asp249, and Gln250 each contribute to the glycerol site. 2 residues coordinate ADP: Thr271 and Gly314. Residues Thr271, Gly314, Gln318, and Gly415 each coordinate ATP. Gly415 and Asn419 together coordinate ADP.

This sequence belongs to the FGGY kinase family.

The enzyme catalyses glycerol + ATP = sn-glycerol 3-phosphate + ADP + H(+). The protein operates within polyol metabolism; glycerol degradation via glycerol kinase pathway; sn-glycerol 3-phosphate from glycerol: step 1/1. With respect to regulation, inhibited by fructose 1,6-bisphosphate (FBP). In terms of biological role, key enzyme in the regulation of glycerol uptake and metabolism. Catalyzes the phosphorylation of glycerol to yield sn-glycerol 3-phosphate. The polypeptide is Glycerol kinase (Mycoplasma capricolum subsp. capricolum (strain California kid / ATCC 27343 / NCTC 10154)).